We begin with the raw amino-acid sequence, 274 residues long: S-adenosylmethionine-dependent nucleotide dehydratase (274 aa).

The region spanning 1–215 (MAYKVNLHIT…VERHAEVSHD (215 aa)) is the Radical SAM core domain. [4Fe-4S] cluster contacts are provided by cysteine 13, cysteine 17, and cysteine 20.

It belongs to the radical SAM superfamily. Prokaryotic viperin family. It depends on [4Fe-4S] cluster as a cofactor.

It carries out the reaction CTP + AH2 + S-adenosyl-L-methionine = 3'-deoxy-3',4'-didehydro-CTP + 5'-deoxyadenosine + L-methionine + A + H2O + H(+). Expression of pVip6 in E.coli (strain MG1655) confers resistance to phages lambda, P1, SECphi6, SECphi8 and T7. Catalyzes the conversion of cytidine triphosphate (CTP) to 3'-deoxy-3',4'-didehydro-CTP (ddhCTP), probably via a SAM-dependent radical mechanism. The modified nucleotide represses transcription from T7 RNA polymerase-directed genes (possibly by acting as chain terminators), strongly suggesting these nucleotides block viral polymerase transcription. The polypeptide is S-adenosylmethionine-dependent nucleotide dehydratase (Selenomonas ruminantium).